The sequence spans 200 residues: Molybdenum cofactor guanylyltransferase (200 aa).

GTP is bound by residues 15 to 17 (LSG), Lys28, Asp74, and Asp104. Asp104 is a binding site for Mg(2+).

This sequence belongs to the MobA family. As to quaternary structure, monomer. Requires Mg(2+) as cofactor.

It is found in the cytoplasm. The catalysed reaction is Mo-molybdopterin + GTP + H(+) = Mo-molybdopterin guanine dinucleotide + diphosphate. Transfers a GMP moiety from GTP to Mo-molybdopterin (Mo-MPT) cofactor (Moco or molybdenum cofactor) to form Mo-molybdopterin guanine dinucleotide (Mo-MGD) cofactor. In Pseudomonas fluorescens (strain SBW25), this protein is Molybdenum cofactor guanylyltransferase.